The primary structure comprises 410 residues: 3-phosphoshikimate 1-carboxyvinyltransferase (410 aa).

Lys-21, Ser-22, and Arg-26 together coordinate 3-phosphoshikimate. Position 21 (Lys-21) interacts with phosphoenolpyruvate. Phosphoenolpyruvate contacts are provided by Gly-69 and Arg-97. The 3-phosphoshikimate site is built by Ser-143, Ser-144, Gln-145, Ser-171, Asp-288, and Lys-315. Residue Gln-145 coordinates phosphoenolpyruvate. Asp-288 serves as the catalytic Proton acceptor. Arg-319, Arg-364, and Lys-389 together coordinate phosphoenolpyruvate.

This sequence belongs to the EPSP synthase family. Monomer.

The protein localises to the cytoplasm. The catalysed reaction is 3-phosphoshikimate + phosphoenolpyruvate = 5-O-(1-carboxyvinyl)-3-phosphoshikimate + phosphate. It participates in metabolic intermediate biosynthesis; chorismate biosynthesis; chorismate from D-erythrose 4-phosphate and phosphoenolpyruvate: step 6/7. Catalyzes the transfer of the enolpyruvyl moiety of phosphoenolpyruvate (PEP) to the 5-hydroxyl of shikimate-3-phosphate (S3P) to produce enolpyruvyl shikimate-3-phosphate and inorganic phosphate. This Bacteroides fragilis (strain YCH46) protein is 3-phosphoshikimate 1-carboxyvinyltransferase.